Here is a 212-residue protein sequence, read N- to C-terminus: Glycerol-3-phosphate acyltransferase (212 aa).

Transmembrane regions (helical) follow at residues 3–23 (ILLA…VIVS), 51–71 (KAAI…VWLA), 78–98 (DVAV…PVFF), 115–135 (AVHP…AFFF), and 139–159 (SLAA…LFGT).

This sequence belongs to the PlsY family. In terms of assembly, probably interacts with PlsX.

The protein resides in the cell inner membrane. It catalyses the reaction an acyl phosphate + sn-glycerol 3-phosphate = a 1-acyl-sn-glycero-3-phosphate + phosphate. It participates in lipid metabolism; phospholipid metabolism. In terms of biological role, catalyzes the transfer of an acyl group from acyl-phosphate (acyl-PO(4)) to glycerol-3-phosphate (G3P) to form lysophosphatidic acid (LPA). This enzyme utilizes acyl-phosphate as fatty acyl donor, but not acyl-CoA or acyl-ACP. This Burkholderia vietnamiensis (strain G4 / LMG 22486) (Burkholderia cepacia (strain R1808)) protein is Glycerol-3-phosphate acyltransferase.